The sequence spans 371 residues: tRNA-specific 2-thiouridylase MnmA (371 aa).

ATP is bound by residues 13-20 (GMSGGVDS) and methionine 39. The tract at residues 99 to 101 (NPD) is interaction with target base in tRNA. The Nucleophile role is filled by cysteine 104. A disulfide bridge connects residues cysteine 104 and cysteine 200. Glycine 128 is a binding site for ATP. Residues 150 to 152 (KDQ) form an interaction with tRNA region. Cysteine 200 serves as the catalytic Cysteine persulfide intermediate. The interval 308 to 309 (RY) is interaction with tRNA.

Belongs to the MnmA/TRMU family.

The protein resides in the cytoplasm. It carries out the reaction S-sulfanyl-L-cysteinyl-[protein] + uridine(34) in tRNA + AH2 + ATP = 2-thiouridine(34) in tRNA + L-cysteinyl-[protein] + A + AMP + diphosphate + H(+). In terms of biological role, catalyzes the 2-thiolation of uridine at the wobble position (U34) of tRNA, leading to the formation of s(2)U34. The sequence is that of tRNA-specific 2-thiouridylase MnmA from Listeria monocytogenes serovar 1/2a (strain ATCC BAA-679 / EGD-e).